The primary structure comprises 216 residues: ATP-dependent Clp protease proteolytic subunit (216 aa).

Catalysis depends on Ser-101, which acts as the Nucleophile. The active site involves His-126.

Belongs to the peptidase S14 family. In terms of assembly, component of the chloroplastic Clp protease core complex.

It is found in the plastid. Its subcellular location is the chloroplast stroma. The catalysed reaction is Hydrolysis of proteins to small peptides in the presence of ATP and magnesium. alpha-casein is the usual test substrate. In the absence of ATP, only oligopeptides shorter than five residues are hydrolyzed (such as succinyl-Leu-Tyr-|-NHMec, and Leu-Tyr-Leu-|-Tyr-Trp, in which cleavage of the -Tyr-|-Leu- and -Tyr-|-Trp bonds also occurs).. Its function is as follows. Cleaves peptides in various proteins in a process that requires ATP hydrolysis. Has a chymotrypsin-like activity. Plays a major role in the degradation of misfolded proteins. The chain is ATP-dependent Clp protease proteolytic subunit from Zea mays (Maize).